Here is a 155-residue protein sequence, read N- to C-terminus: Basic phospholipase A2 PC9 (155 aa).

A signal peptide spans Met1 to Ala21. Positions Ile22 to Leu27 are excised as a propeptide. Disulfide bonds link Cys38/Cys98, Cys54/Cys144, Cys56/Cys72, Cys71/Cys125, Cys78/Cys118, Cys87/Cys111, and Cys105/Cys116. 3 residues coordinate Ca(2+): Tyr55, Gly57, and Gly59. His75 is a catalytic residue. Asp76 lines the Ca(2+) pocket. Asp119 is an active-site residue.

It belongs to the phospholipase A2 family. Group I subfamily. D49 sub-subfamily. Ca(2+) serves as cofactor. In terms of tissue distribution, expressed by the venom gland.

Its subcellular location is the secreted. It catalyses the reaction a 1,2-diacyl-sn-glycero-3-phosphocholine + H2O = a 1-acyl-sn-glycero-3-phosphocholine + a fatty acid + H(+). In terms of biological role, snake venom phospholipase A2 (PLA2) that inhibits neuromuscular transmission by blocking acetylcholine release from the nerve termini. PLA2 catalyzes the calcium-dependent hydrolysis of the 2-acyl groups in 3-sn-phosphoglycerides. The chain is Basic phospholipase A2 PC9 from Laticauda colubrina (Yellow-lipped sea krait).